Reading from the N-terminus, the 200-residue chain is Urease accessory protein UreE (200 aa).

Residues 171–200 (HHGHAHPHPHDHDHQHGPGCAHGRHGHDHH) form a disordered region.

This sequence belongs to the UreE family.

It localises to the cytoplasm. Functionally, involved in urease metallocenter assembly. Binds nickel. Probably functions as a nickel donor during metallocenter assembly. The sequence is that of Urease accessory protein UreE from Burkholderia vietnamiensis (strain G4 / LMG 22486) (Burkholderia cepacia (strain R1808)).